We begin with the raw amino-acid sequence, 98 residues long: Nucleoid-associated protein pc0477 (98 aa).

Belongs to the YbaB/EbfC family. Homodimer.

The protein resides in the cytoplasm. It localises to the nucleoid. In terms of biological role, binds to DNA and alters its conformation. May be involved in regulation of gene expression, nucleoid organization and DNA protection. This is Nucleoid-associated protein pc0477 from Protochlamydia amoebophila (strain UWE25).